The chain runs to 298 residues: Glyoxalase domain-containing protein 4 (298 aa).

The VOC 1 domain maps to 5 to 130 (RALHFVFKVG…GGYKFYLQDR (126 aa)). Lysine 109 carries the N6-succinyllysine modification. Serine 131 bears the Phosphoserine mark. Positions 137–258 (PVLKVTLAVS…DGHEICFVGD (122 aa)) constitute a VOC 2 domain. The residue at position 273 (lysine 273) is an N6-succinyllysine.

The protein belongs to the glyoxalase I family. As to quaternary structure, interacts with NUDT9.

Its subcellular location is the mitochondrion. In Rattus norvegicus (Rat), this protein is Glyoxalase domain-containing protein 4 (Glod4).